The following is a 239-amino-acid chain: Small ribosomal subunit protein uS2 (239 aa).

This sequence belongs to the universal ribosomal protein uS2 family.

The protein is Small ribosomal subunit protein uS2 of Synechococcus sp. (strain CC9902).